The primary structure comprises 85 residues: Large ribosomal subunit protein bL27 (85 aa).

It belongs to the bacterial ribosomal protein bL27 family.

In Persephonella marina (strain DSM 14350 / EX-H1), this protein is Large ribosomal subunit protein bL27.